The primary structure comprises 336 residues: Large ribosomal subunit protein uL3 (336 aa).

A disordered region spans residues 1-34 (MVRHHQPRKGSVAFSPRKRAAKETPRIKSWPQND).

The protein belongs to the universal ribosomal protein uL3 family. Part of the 50S ribosomal subunit. Forms a cluster with proteins L14 and L24e.

Its function is as follows. One of the primary rRNA binding proteins, it binds directly near the 3'-end of the 23S rRNA, where it nucleates assembly of the 50S subunit. This chain is Large ribosomal subunit protein uL3, found in Methanobrevibacter smithii (strain ATCC 35061 / DSM 861 / OCM 144 / PS).